The following is a 451-amino-acid chain: Exodeoxyribonuclease 7 large subunit (451 aa).

Belongs to the XseA family. Heterooligomer composed of large and small subunits.

It is found in the cytoplasm. It catalyses the reaction Exonucleolytic cleavage in either 5'- to 3'- or 3'- to 5'-direction to yield nucleoside 5'-phosphates.. In terms of biological role, bidirectionally degrades single-stranded DNA into large acid-insoluble oligonucleotides, which are then degraded further into small acid-soluble oligonucleotides. This is Exodeoxyribonuclease 7 large subunit from Neisseria meningitidis serogroup C / serotype 2a (strain ATCC 700532 / DSM 15464 / FAM18).